We begin with the raw amino-acid sequence, 116 residues long: U3-theraphotoxin-Lsp1a (116 aa).

Residues 1-17 (MKLSTFIIMISLAVALA) form the signal peptide. Residues 18–50 (TWPSEHIEGSDSETKLNVELGPYALADRAEKGK) constitute a propeptide that is removed on maturation.

This sequence belongs to the neurotoxin 25 family. F7 subfamily. Post-translationally, contains 3 disulfide bonds. Expressed by the venom gland.

It localises to the secreted. This Lasiodora sp. (strain IBSP 8539) (Brazilian salmon pink birdeater) protein is U3-theraphotoxin-Lsp1a.